The primary structure comprises 91 residues: Acylphosphatase (91 aa).

Positions 5-91 (CSKFIVSGHV…EHDYQGFEIL (87 aa)) constitute an Acylphosphatase-like domain. Active-site residues include Arg20 and Asn38.

This sequence belongs to the acylphosphatase family.

The catalysed reaction is an acyl phosphate + H2O = a carboxylate + phosphate + H(+). The protein is Acylphosphatase (acyP) of Vibrio cholerae serotype O1 (strain ATCC 39315 / El Tor Inaba N16961).